Reading from the N-terminus, the 428-residue chain is Cell division cycle 20.6, cofactor of APC complex (428 aa).

WD repeat units follow at residues 106-145 (WFLT…TSKL), 150-189 (DENG…HVRT), 193-230 (GHES…SIIG), 234-273 (GHTE…SNPT), 282-324 (EHTA…CLNS), 326-367 (ETGS…KMAE), and 370-409 (GHTS…PKTT).

It belongs to the WD repeat CDC20/Fizzy family. As to quaternary structure, the APC/C is composed of at least 11 subunits that stay tightly associated throughout the cell cycle.

The protein localises to the nucleus. Its pathway is protein modification; protein ubiquitination. Its function is as follows. Component of the anaphase promoting complex/cyclosome (APC/C), a cell cycle-regulated E3 ubiquitin-protein ligase complex that controls progression through mitosis and the G1 phase of the cell cycle. The polypeptide is Cell division cycle 20.6, cofactor of APC complex (CDC20-6) (Arabidopsis thaliana (Mouse-ear cress)).